A 227-amino-acid chain; its full sequence is Chloronitrobenzene nitroreductase (227 aa).

Residue R14–R18 participates in FMN binding. Residue S44 coordinates NADP(+). FMN is bound by residues G172–L173 and R215.

Belongs to the nitroreductase family. The cofactor is FMN.

The enzyme catalyses N-phenylhydroxylamine + 2 NADP(+) + H2O = nitrobenzene + 2 NADPH + 2 H(+). It functions in the pathway xenobiotic degradation; nitrobenzene degradation. Its pathway is xenobiotic degradation; 4-chloronitrobenzene degradation. In terms of biological role, involved in the biodegradation of chlorinated nitroaromatic compounds. Catalyzes the reduction of 4-chloronitrobenzene to yield 1-hydroxylamino-4-chlorobenzene. Probably also able to catalyze the two-electron reduction of nitrobenzene (NB) to produce a nitrosobenzene (NOB) intermediate, which is immediately reduced to hydroxylaminobenzene (HAB) by a second two-electron transfer. This Comamonas testosteroni (Pseudomonas testosteroni) protein is Chloronitrobenzene nitroreductase.